A 53-amino-acid chain; its full sequence is Metallocarboxypeptidase inhibitor (53 aa).

Cystine bridges form between Cys9–Cys23, Cys15–Cys51, and Cys27–Cys38. Ala53 provides a ligand contact to Zn(2+).

Monomer. Interacts (via C-terminus) with human CPA4.

Its function is as follows. Metallocarboxypeptidase inhibitor. Has an inhibitory effect on bovine CPA1 and CPB2, human CPA1, CPA2, CPA4, CPB1 and CPB2, and porcine CPB1. Does not inhibit D.melanogaster svr (carboxypeptidase D). Shows no activity against serine proteases subtilisin or bovine trypsin, cysteine protease papain, and aspartyl protease porcine pepsin. This Nerita versicolor (Four-tooth nerite) protein is Metallocarboxypeptidase inhibitor.